The sequence spans 66 residues: Ribosome biogenesis protein Nop10 (66 aa).

It belongs to the NOP10 family.

Its function is as follows. Involved in ribosome biogenesis; more specifically in 18S rRNA pseudouridylation and in cleavage of pre-rRNA. This Desulfurococcus amylolyticus (strain DSM 18924 / JCM 16383 / VKM B-2413 / 1221n) (Desulfurococcus kamchatkensis) protein is Ribosome biogenesis protein Nop10.